The sequence spans 113 residues: Large ribosomal subunit protein bL19 (113 aa).

It belongs to the bacterial ribosomal protein bL19 family.

Its function is as follows. This protein is located at the 30S-50S ribosomal subunit interface and may play a role in the structure and function of the aminoacyl-tRNA binding site. The sequence is that of Large ribosomal subunit protein bL19 from Corynebacterium jeikeium (strain K411).